The sequence spans 257 residues: Probable enoyl-CoA hydratase echA17 (257 aa).

This sequence belongs to the enoyl-CoA hydratase/isomerase family.

It catalyses the reaction a (3S)-3-hydroxyacyl-CoA = a (2E)-enoyl-CoA + H2O. It carries out the reaction a 4-saturated-(3S)-3-hydroxyacyl-CoA = a (3E)-enoyl-CoA + H2O. Functionally, could possibly oxidize fatty acids using specific components. In Mycobacterium avium (strain 104), this protein is Probable enoyl-CoA hydratase echA17 (echA17).